A 65-amino-acid polypeptide reads, in one-letter code: Large ribosomal subunit protein uL29 (65 aa).

This sequence belongs to the universal ribosomal protein uL29 family.

This chain is Large ribosomal subunit protein uL29, found in Bacteroides thetaiotaomicron (strain ATCC 29148 / DSM 2079 / JCM 5827 / CCUG 10774 / NCTC 10582 / VPI-5482 / E50).